Reading from the N-terminus, the 212-residue chain is Probable chemoreceptor glutamine deamidase CheD (212 aa).

This sequence belongs to the CheD family.

It catalyses the reaction L-glutaminyl-[protein] + H2O = L-glutamyl-[protein] + NH4(+). In terms of biological role, probably deamidates glutamine residues to glutamate on methyl-accepting chemotaxis receptors (MCPs), playing an important role in chemotaxis. The polypeptide is Probable chemoreceptor glutamine deamidase CheD (Bordetella parapertussis (strain 12822 / ATCC BAA-587 / NCTC 13253)).